A 556-amino-acid chain; its full sequence is uncharacterized protein (556 aa).

Positions 69–129 (RRGHTSGHAS…SSARSSSTSG (61 aa)) are disordered. 2 stretches are compositionally biased toward low complexity: residues 74 to 85 (SGHASEHTSSSR) and 93 to 129 (SMSSSSESDSDSVSSESNPKSYSDSSTSSARSSSTSG). The helical transmembrane segment at 379–399 (LGLYIFIGVLLGLIGVIGLFI) threads the bilayer. The RING-type; atypical zinc-finger motif lies at 498 to 541 (CTICLCEYSEESPLYRELPCHHIFHPACIDPYLLKNSDLCPLCK).

It localises to the vacuole membrane. The protein localises to the cell membrane. This is an uncharacterized protein from Schizosaccharomyces pombe (strain 972 / ATCC 24843) (Fission yeast).